The sequence spans 665 residues: PR5-like receptor kinase (665 aa).

A signal peptide spans 1 to 24; that stretch reads MVEGFSLSLMFLLVSHFFVSGVMS. Residues 25-276 lie on the Extracellular side of the membrane; that stretch reads RNFTIENKCD…TKQKSSWKLK (252 aa). Residues N26 and N88 are each glycosylated (N-linked (GlcNAc...) asparagine). Disulfide bonds link C33-C249, C81-C91, C96-C103, C153-C238, C158-C221, C166-C184, C188-C197, and C198-C208. N-linked (GlcNAc...) asparagine glycosylation is present at N163. N-linked (GlcNAc...) asparagine glycosylation is present at N233. The chain crosses the membrane as a helical span at residues 277–297; sequence LIVGVSAALTLMILIVVVIIV. Residues 298-665 are Cytoplasmic-facing; sequence RTKNMRNSEW…DVLQHGSRSS (368 aa). The region spanning 331-620 is the Protein kinase domain; it reads NSFAHVLGKG…ALQVPPNPLL (290 aa). Residues 337 to 345 and K360 each bind ATP; that span reads LGKGGFGTV. D455 serves as the catalytic Proton acceptor.

In the N-terminal section; belongs to the thaumatin family. This sequence in the C-terminal section; belongs to the protein kinase superfamily. Ser/Thr protein kinase family. Post-translationally, autophosphorylated in vitro. Expressed in roots. Expressed at low levels in stems.

The protein resides in the membrane. It carries out the reaction L-seryl-[protein] + ATP = O-phospho-L-seryl-[protein] + ADP + H(+). The enzyme catalyses L-threonyl-[protein] + ATP = O-phospho-L-threonyl-[protein] + ADP + H(+). Its function is as follows. Possesses kinase activity in vitro. This chain is PR5-like receptor kinase, found in Arabidopsis thaliana (Mouse-ear cress).